The chain runs to 217 residues: uncharacterized protein (217 aa).

This is an uncharacterized protein from Acidianus sp. F28 (AFV-2).